The following is a 416-amino-acid chain: Actin-like protein 9 (416 aa).

Residues 1 to 40 form a disordered region; the sequence is MDASRPKSSESQSSLEAPRPGPNPSPNVVNKPLQRDSPGM.

The protein belongs to the actin family. In terms of assembly, interacts with ACTL7A. Testis-specific.

It localises to the cytoplasmic vesicle. The protein localises to the secretory vesicle. The protein resides in the acrosome. It is found in the cytoplasm. Its subcellular location is the cytoskeleton. It localises to the perinuclear theca. Its function is as follows. Testis-specic protein that plays an important role in fusion of proacrosomal vesicles and perinuclear theca formation. This is Actin-like protein 9 from Homo sapiens (Human).